Here is a 200-residue protein sequence, read N- to C-terminus: Dephospho-CoA kinase (200 aa).

Residues 6 to 200 enclose the DPCK domain; that stretch reads AIALSGGIAT…KIKAKYLEKK (195 aa). Residue 14-19 coordinates ATP; it reads ATGKST.

The protein belongs to the CoaE family.

The protein resides in the cytoplasm. The enzyme catalyses 3'-dephospho-CoA + ATP = ADP + CoA + H(+). Its pathway is cofactor biosynthesis; coenzyme A biosynthesis; CoA from (R)-pantothenate: step 5/5. Catalyzes the phosphorylation of the 3'-hydroxyl group of dephosphocoenzyme A to form coenzyme A. The protein is Dephospho-CoA kinase of Sulfurimonas denitrificans (strain ATCC 33889 / DSM 1251) (Thiomicrospira denitrificans (strain ATCC 33889 / DSM 1251)).